The following is a 132-amino-acid chain: Global transcriptional regulator Spx 2 (132 aa).

An intrachain disulfide couples Cys-10 to Cys-13.

Belongs to the ArsC family. Spx subfamily. In terms of assembly, interacts with the C-terminal domain of the alpha subunit of the RNAP.

It localises to the cytoplasm. In terms of biological role, global transcriptional regulator that plays a key role in stress response and exerts either positive or negative regulation of genes. Acts by interacting with the C-terminal domain of the alpha subunit of the RNA polymerase (RNAP). This interaction can enhance binding of RNAP to the promoter region of target genes and stimulate their transcription, or block interaction of RNAP with activator. The protein is Global transcriptional regulator Spx 2 of Lactococcus lactis subsp. lactis (strain IL1403) (Streptococcus lactis).